Consider the following 573-residue polypeptide: Putative 15-O-acetyltransferase SAT12 (573 aa).

A disordered region spans residues 1 to 40 (MLDDDCSPTSSSEMSNASSREASITSRSSSTSGNNSLPED). The segment covering 7-36 (SPTSSSEMSNASSREASITSRSSSTSGNNS) has biased composition (low complexity).

It belongs to the trichothecene O-acetyltransferase family.

The protein operates within mycotoxin biosynthesis. In terms of biological role, putative 15-O-acetyltransferase; part of the satratoxin SC2 cluster involved in the biosynthesis of satratoxins, trichothecene mycotoxins that are associated with human food poisonings. Satratoxins are suggested to be made by products of multiple gene clusters (SC1, SC2 and SC3) that encode 21 proteins in all, including polyketide synthases, acetyltransferases, and other enzymes expected to modify the trichothecene skeleton. SC1 encodes 10 proteins, SAT1 to SAT10. The largest are SAT8, which encodes a putative polyketide synthase (PKS) with a conventional non-reducing architecture, and SAT10, a putative protein containing four ankyrin repeats and thus may be involved in protein scaffolding. The putative short-chain reductase SAT3 may assist the PKS in some capacity. SAT6 contains a secretory lipase domain and acts probably as a trichothecene esterase. SAT5 encodes a putative acetyltransferase, and so, with SAT6, may affect endogenous protection from toxicity. The probable transcription factor SAT9 may regulate the expression of the SC1 cluster. SC2 encodes proteins SAT11 to SAT16, the largest of which encodes the putative reducing PKS SAT13. SAT11 is a cytochrome P450 monooxygenase, while SAT14 and SAT16 are probable acetyltransferases. The SC2 cluster may be regulated by the transcription factor SAT15. SC3 is a small cluster that encodes 5 proteins, SAT17 to SAT21. SAT21 is a putative MFS-type transporter which may have a role in exporting secondary metabolites. The four other proteins putatively encoded in SC3 include the taurine hydroxylase-like protein SAT17, the O-methyltransferase SAT18, the acetyltransferase SAT19, and the Cys6-type zinc finger SAT20, the latter being probably involved in regulation of SC3 expression. The protein is Putative 15-O-acetyltransferase SAT12 of Stachybotrys chartarum (strain CBS 109288 / IBT 7711) (Toxic black mold).